A 251-amino-acid chain; its full sequence is Pyrroloquinoline-quinone synthase (251 aa).

Belongs to the PqqC family.

The enzyme catalyses 6-(2-amino-2-carboxyethyl)-7,8-dioxo-1,2,3,4,7,8-hexahydroquinoline-2,4-dicarboxylate + 3 O2 = pyrroloquinoline quinone + 2 H2O2 + 2 H2O + H(+). The protein operates within cofactor biosynthesis; pyrroloquinoline quinone biosynthesis. Its function is as follows. Ring cyclization and eight-electron oxidation of 3a-(2-amino-2-carboxyethyl)-4,5-dioxo-4,5,6,7,8,9-hexahydroquinoline-7,9-dicarboxylic-acid to PQQ. This Pseudomonas putida (strain W619) protein is Pyrroloquinoline-quinone synthase.